The chain runs to 283 residues: Protein/nucleic acid deglycase HchA (283 aa).

Zn(2+) is bound by residues histidine 86, glutamate 91, and histidine 123. The active-site Nucleophile is cysteine 185.

It belongs to the peptidase C56 family. HchA subfamily. Homodimer.

It localises to the cytoplasm. The catalysed reaction is N(omega)-(1-hydroxy-2-oxopropyl)-L-arginyl-[protein] + H2O = lactate + L-arginyl-[protein] + H(+). It carries out the reaction N(6)-(1-hydroxy-2-oxopropyl)-L-lysyl-[protein] + H2O = lactate + L-lysyl-[protein] + H(+). It catalyses the reaction S-(1-hydroxy-2-oxopropyl)-L-cysteinyl-[protein] + H2O = lactate + L-cysteinyl-[protein] + H(+). The enzyme catalyses N(omega)-(1-hydroxy-2-oxoethyl)-L-arginyl-[protein] + H2O = L-arginyl-[protein] + glycolate + H(+). The catalysed reaction is N(6)-(1-hydroxy-2-oxoethyl)-L-lysyl-[protein] + H2O = glycolate + L-lysyl-[protein] + H(+). It carries out the reaction S-(1-hydroxy-2-oxoethyl)-L-cysteinyl-[protein] + H2O = glycolate + L-cysteinyl-[protein] + H(+). It catalyses the reaction N(2)-(1-hydroxy-2-oxopropyl)-dGTP + H2O = lactate + dGTP + H(+). The enzyme catalyses N(2)-(1-hydroxy-2-oxopropyl)-GTP + H2O = lactate + GTP + H(+). The catalysed reaction is N(2)-(1-hydroxy-2-oxopropyl)-GDP + H2O = lactate + GDP + H(+). It carries out the reaction N(2)-(1-hydroxy-2-oxopropyl)-GMP + H2O = lactate + GMP + H(+). It catalyses the reaction N(2)-(1-hydroxy-2-oxoethyl)-dGTP + H2O = dGTP + glycolate + H(+). The enzyme catalyses N(2)-(1-hydroxy-2-oxoethyl)-GTP + H2O = glycolate + GTP + H(+). The catalysed reaction is N(2)-(1-hydroxy-2-oxoethyl)-GDP + H2O = glycolate + GDP + H(+). It carries out the reaction N(2)-(1-hydroxy-2-oxoethyl)-GMP + H2O = glycolate + GMP + H(+). It catalyses the reaction an N(2)-(1-hydroxy-2-oxopropyl)-guanosine in RNA + H2O = a guanosine in RNA + lactate + H(+). The enzyme catalyses an N(2)-(1-hydroxy-2-oxopropyl)-2'-deoxyguanosine in DNA + H2O = a 2'-deoxyguanosine in DNA + lactate + H(+). The catalysed reaction is an N(2)-(1-hydroxy-2-oxoethyl)-guanosine in RNA + H2O = a guanosine in RNA + glycolate + H(+). It carries out the reaction an N(2)-(1-hydroxy-2-oxoethyl)-2'-deoxyguanosine in DNA + H2O = a 2'-deoxyguanosine in DNA + glycolate + H(+). In terms of biological role, protein and nucleotide deglycase that catalyzes the deglycation of the Maillard adducts formed between amino groups of proteins or nucleotides and reactive carbonyl groups of glyoxals. Thus, functions as a protein deglycase that repairs methylglyoxal- and glyoxal-glycated proteins, and releases repaired proteins and lactate or glycolate, respectively. Deglycates cysteine, arginine and lysine residues in proteins, and thus reactivates these proteins by reversing glycation by glyoxals. Acts on early glycation intermediates (hemithioacetals and aminocarbinols), preventing the formation of Schiff bases and advanced glycation endproducts (AGE). Also functions as a nucleotide deglycase able to repair glycated guanine in the free nucleotide pool (GTP, GDP, GMP, dGTP) and in DNA and RNA. Is thus involved in a major nucleotide repair system named guanine glycation repair (GG repair), dedicated to reversing methylglyoxal and glyoxal damage via nucleotide sanitization and direct nucleic acid repair. Plays an important role in protecting cells from carbonyl stress. This Escherichia coli O139:H28 (strain E24377A / ETEC) protein is Protein/nucleic acid deglycase HchA.